The sequence spans 231 residues: MPCRREEEEEAGDEAEGEEDDDSFLLLQQSVTLGGSTDVDRLIVQIGETLQLDTAHDRPASPCAAPGPPPAPPRVLAALSADKTGTPARRLLRPTGSAETGDPAPPGAVRCVLGERGRVRGRSAPYCVAEIAPGASALPGPGRRGWLPGSVASHRIQQRRWTAGGARAADDDPHRLLQQLVLSGNLIKEAVRRLQRAVAAVAATSPASAPGSGGGRSGPDSVTLQPSGAWL.

Disordered stretches follow at residues 1-24 and 53-109; these read MPCR…DDSF and DTAH…PGAV. The segment covering 7–23 has biased composition (acidic residues); the sequence is EEEEAGDEAEGEEDDDS. An involved in GSK-3 binding region spans residues 172 to 194; that stretch reads DPHRLLQQLVLSGNLIKEAVRRL. The segment at 203–231 is disordered; that stretch reads ATSPASAPGSGGGRSGPDSVTLQPSGAWL.

Belongs to the GSK-3-binding protein family. As to quaternary structure, binds GSK-3 and prevents GSK-3-dependent phosphorylation.

In terms of biological role, positively regulates the Wnt signaling pathway by stabilizing beta-catenin through the association with GSK-3. This chain is GSK-3-binding protein FRAT2 (Frat2), found in Mus musculus (Mouse).